A 419-amino-acid chain; its full sequence is Zinc finger protein Pegasus (419 aa).

Residue lysine 5 forms a Glycyl lysine isopeptide (Lys-Gly) (interchain with G-Cter in SUMO2) linkage. Residues 36–55 form a disordered region; that stretch reads DKEAETLQGAGTDGDQNGLD. C2H2-type zinc fingers lie at residues 82–104, 110–132, and 138–161; these read LKCR…IRIH, HRCH…MRSH, and YKCE…RRKH. Lysine 185 is covalently cross-linked (Glycyl lysine isopeptide (Lys-Gly) (interchain with G-Cter in SUMO2)). Over residues 262-273 the composition is skewed to polar residues; it reads LSSLPPENQNPA. Disordered stretches follow at residues 262-284 and 297-356; these read LSSL…PDEK and VSAV…PTLP. Low complexity predominate over residues 297 to 311; it reads VSAVSASIPQSSSPT. The span at 332–349 shows a compositional bias: polar residues; that stretch reads SEPSAHTSTPSIGNSQPS. C2H2-type zinc fingers lie at residues 364–386 and 392–416; these read HHCQ…MGCH and FQCN…RGQH.

It belongs to the Ikaros C2H2-type zinc-finger protein family. As to quaternary structure, self-associates. Interacts with other family members; IKZF1, IKZF2, IKZF3 and IKZF4.

Its subcellular location is the nucleus. Transcriptional repressor that binds the core 5'GNNTGTNG-3' DNA consensus sequence. Involved in megakaryocyte differentiation. This chain is Zinc finger protein Pegasus (Ikzf5), found in Mus musculus (Mouse).